Here is a 722-residue protein sequence, read N- to C-terminus: Polyribonucleotide nucleotidyltransferase (722 aa).

Mg(2+)-binding residues include D505 and D511. Residues 572–631 (PSITTIKIHPDKIRDVIGKGGATIRGICDETGASIDLDDDGNVKIYADNAAAAQAAVNRV) enclose the KH domain. In terms of domain architecture, S1 motif spans 641–709 (GAIYKGRVER…NRGRVKLSMK (69 aa)).

This sequence belongs to the polyribonucleotide nucleotidyltransferase family. As to quaternary structure, component of the RNA degradosome, which is a multiprotein complex involved in RNA processing and mRNA degradation. It depends on Mg(2+) as a cofactor.

The protein resides in the cytoplasm. The enzyme catalyses RNA(n+1) + phosphate = RNA(n) + a ribonucleoside 5'-diphosphate. In terms of biological role, involved in mRNA degradation. Catalyzes the phosphorolysis of single-stranded polyribonucleotides processively in the 3'- to 5'-direction. This Marinobacter nauticus (strain ATCC 700491 / DSM 11845 / VT8) (Marinobacter aquaeolei) protein is Polyribonucleotide nucleotidyltransferase.